The chain runs to 1038 residues: Translation initiation factor IF-2 (1038 aa).

Disordered stretches follow at residues 39-346 and 403-451; these read TISE…KWQE and KPKA…PEKV. The segment covering 103-125 has biased composition (polar residues); it reads RNTTSNAPEASVANNQIASSEAN. Low complexity predominate over residues 157–176; sequence PQKPAAPEAEPEAQSQAPAK. 2 stretches are compositionally biased toward basic and acidic residues: residues 178 to 197 and 226 to 243; these read AVEK…ERQP and PILK…DQAK. Low complexity predominate over residues 407-423; the sequence is ARAATAATAAPISSPTT. Basic and acidic residues predominate over residues 431 to 450; that stretch reads NNRDQNRRQETEVKRERPEK. A tr-type G domain is found at 532 to 705; that stretch reads RRPPVVTIMG…LLVAEVGELS (174 aa). Residues 541–548 form a G1 region; it reads GHVDHGKT. 541–548 lines the GTP pocket; that stretch reads GHVDHGKT. Positions 566–570 are G2; it reads GITQH. The tract at residues 591-594 is G3; the sequence is DTPG. GTP-binding positions include 591-595 and 645-648; these read DTPGH and NKID. The segment at 645 to 648 is G4; it reads NKID. Residues 681–683 form a G5 region; the sequence is SAI.

It belongs to the TRAFAC class translation factor GTPase superfamily. Classic translation factor GTPase family. IF-2 subfamily.

The protein resides in the cytoplasm. Its function is as follows. One of the essential components for the initiation of protein synthesis. Protects formylmethionyl-tRNA from spontaneous hydrolysis and promotes its binding to the 30S ribosomal subunits. Also involved in the hydrolysis of GTP during the formation of the 70S ribosomal complex. The protein is Translation initiation factor IF-2 of Trichormus variabilis (strain ATCC 29413 / PCC 7937) (Anabaena variabilis).